A 58-amino-acid chain; its full sequence is Small ribosomal subunit protein bS21 (58 aa).

The disordered stretch occupies residues 27–58 (GVLSEARKHEHYEKPSVKRKKKSEAARKRKFK). The span at 31 to 42 (EARKHEHYEKPS) shows a compositional bias: basic and acidic residues. Residues 43 to 58 (VKRKKKSEAARKRKFK) show a composition bias toward basic residues.

It belongs to the bacterial ribosomal protein bS21 family.

The polypeptide is Small ribosomal subunit protein bS21 (Desulfitobacterium hafniense (strain DSM 10664 / DCB-2)).